A 508-amino-acid polypeptide reads, in one-letter code: Methionine--tRNA ligase (508 aa).

Residues 12-22 (YYVNDIPHIGH) carry the 'HIGH' region motif. Positions 295–299 (KISKS) match the 'KMSKS' region motif. ATP is bound at residue Lys-298.

This sequence belongs to the class-I aminoacyl-tRNA synthetase family. MetG type 2B subfamily. In terms of assembly, monomer.

The protein localises to the cytoplasm. The catalysed reaction is tRNA(Met) + L-methionine + ATP = L-methionyl-tRNA(Met) + AMP + diphosphate. Functionally, is required not only for elongation of protein synthesis but also for the initiation of all mRNA translation through initiator tRNA(fMet) aminoacylation. The sequence is that of Methionine--tRNA ligase from Rickettsia conorii (strain ATCC VR-613 / Malish 7).